The following is a 533-amino-acid chain: GMP synthase [glutamine-hydrolyzing] (533 aa).

Positions 25–215 constitute a Glutamine amidotransferase type-1 domain; sequence SIVIFDFGSQ…VFNICKCHAN (191 aa). Cys102 functions as the Nucleophile in the catalytic mechanism. Residues His189 and Glu191 contribute to the active site. Positions 216–408 constitute a GMPS ATP-PPase domain; the sequence is WTMGNYIQES…LGLPDEMIWR (193 aa). ATP is bound at residue 243–249; it reads SGGVDSA.

In terms of assembly, homodimer.

The catalysed reaction is XMP + L-glutamine + ATP + H2O = GMP + L-glutamate + AMP + diphosphate + 2 H(+). Its pathway is purine metabolism; GMP biosynthesis; GMP from XMP (L-Gln route): step 1/1. Its function is as follows. Catalyzes the synthesis of GMP from XMP. This chain is GMP synthase [glutamine-hydrolyzing], found in Dehalococcoides mccartyi (strain CBDB1).